The sequence spans 215 residues: Probable GTP-binding protein EngB (215 aa).

Residues 31 to 215 (GPPEIAFAGR…RAAILQAIAV (185 aa)) form the EngB-type G domain. GTP contacts are provided by residues 39–46 (GRSNVGKS), 66–70 (GRTQE), 93–96 (DMPG), 160–163 (TKSD), and 194–196 (TSS). Residues S46 and T68 each contribute to the Mg(2+) site.

It belongs to the TRAFAC class TrmE-Era-EngA-EngB-Septin-like GTPase superfamily. EngB GTPase family. The cofactor is Mg(2+).

In terms of biological role, necessary for normal cell division and for the maintenance of normal septation. This is Probable GTP-binding protein EngB from Bartonella quintana (strain Toulouse) (Rochalimaea quintana).